The following is a 447-amino-acid chain: GTPase Der (447 aa).

EngA-type G domains lie at 3-167 and 180-353; these read PVIA…HLAD and IRLA…ASAN. GTP contacts are provided by residues 9–16, 56–60, 119–122, 186–193, 233–237, and 298–301; these read GRPNVGKS, DTGGF, NKAE, DTAGL, and NKWD. Residues 354–438 form the KH-like domain; it reads RKMSTPVLTR…PMRIQMKSSH (85 aa).

The protein belongs to the TRAFAC class TrmE-Era-EngA-EngB-Septin-like GTPase superfamily. EngA (Der) GTPase family. Associates with the 50S ribosomal subunit.

In terms of biological role, GTPase that plays an essential role in the late steps of ribosome biogenesis. The sequence is that of GTPase Der from Polaromonas sp. (strain JS666 / ATCC BAA-500).